The primary structure comprises 314 residues: tRNA selenocysteine 1-associated protein 1 (314 aa).

RRM domains are found at residues 2 to 85 and 94 to 173; these read NSLW…RSNY and FSLF…LASS.

It belongs to the RRM TRSPAP family.

The protein resides in the nucleus. The protein localises to the cytoplasm. Functionally, involved in the early steps of selenocysteine biosynthesis and tRNA(Sec) charging to the later steps resulting in the cotranslational incorporation of selenocysteine into selenoproteins. The sequence is that of tRNA selenocysteine 1-associated protein 1 from Danio rerio (Zebrafish).